The primary structure comprises 1193 residues: MPALWLGCCLCFSLLLPAARATSRREVCDCNGKSRQCIFDRELHRQTGNGFRCLNCNDNTDGIHCEKCKNGFYRHRERDRCLPCNCNSKGSLSARCDNSGRCSCKPGVTGARCDRCLPGFHMLTDAGCTQDQRLLDSKCDCDPAGIAGPCDAGRCVCKPAVTGERCDRCRSGYYNLDGGNPEGCTQCFCYGHSASCRSSAEYSVHKITSTFHQDVDGWKAVQRNGSPAKLQWSQRHQDVFSSAQRLDPVYFVAPAKFLGNQQVSYGQSLSFDYRVDRGGRHPSAHDVILEGAGLRITAPLMPLGKTLPCGLTKTYTFRLNEHPSNNWSPQLSYFEYRRLLRNLTALRIRATYGEYSTGYIDNVTLISARPVSGAPAPWVEQCICPVGYKGQFCQDCASGYKRDSARLGPFGTCIPCNCQGGGACDPDTGDCYSGDENPDIECADCPIGFYNDPHDPRSCKPCPCHNGFSCSVMPETEEVVCNNCPPGVTGARCELCADGYFGDPFGEHGPVRPCQPCQCNNNVDPSASGNCDRLTGRCLKCIHNTAGIYCDQCKAGYFGDPLAPNPADKCRACNCNPMGSEPVGCRSDGTCVCKPGFGGPNCEHGAFSCPACYNQVKIQMDQFMQQLQRMEALISKAQGGDGVVPDTELEGRMQQAEQALQDILRDAQISEGASRSLGLQLAKVRSQENSYQSRLDDLKMTVERVRALGSQYQNRVRDTHRLITQMQLSLAESEASLGNTNIPASDHYVGPNGFKSLAQEATRLAESHVESASNMEQLTRETEDYSKQALSLVRKALHEGVGSGSGSPDGAVVQGLVEKLEKTKSLAQQLTREATQAEIEADRSYQHSLRLLDSVSRLQGVSDQSFQVEEAKRIKQKADSLSSLVTRHMDEFKRTQKNLGNWKEEAQQLLQNGKSGREKSDQLLSRANLAKSRAQEALSMGNATFYEVESILKNLREFDLQVDNRKAEAEEAMKRLSYISQKVSDASDKTQQAERALGSAAADAQRAKNGAGEALEISSEIEQEIGSLNLEANVTADGALAMEKGLASLKSEMREVEGELERKELEFDTNMDAVQMVITEAQKVDTRAKNAGVTIQDTLNTLDGLLHLMDQPLSVDEEGLVLLEQKLSRAKTQINSQLRPMMSELEERARQQRGHLHLLETSIDGILADVKNLENIRDNLPPGCYNTQALEQQ.

The N-terminal stretch at 1 to 21 (MPALWLGCCLCFSLLLPAARA) is a signal peptide. Disulfide bonds link C28–C37, C30–C53, C56–C65, C68–C81, C84–C96, C86–C102, C104–C113, C116–C128, C139–C150, C141–C155, C157–C166, and C169–C184. 3 consecutive Laminin EGF-like domains span residues 28-83 (CDCN…RCLP), 84-130 (CNCN…GCTQ), and 139-186 (CDCD…GCTQ). The Laminin EGF-like 4; first part domain maps to 187–196 (CFCYGHSASC). Residues 213 to 381 (QDVDGWKAVQ…SGAPAPWVEQ (169 aa)) enclose the Laminin IV type A domain. 2 N-linked (GlcNAc...) asparagine glycosylation sites follow: N342 and N362. The region spanning 382 to 415 (CICPVGYKGQFCQDCASGYKRDSARLGPFGTCIP) is the Laminin EGF-like 4; second part domain. Laminin EGF-like domains follow at residues 416–461 (CNCQ…SCKP), 462–516 (CPCH…PCQP), and 517–572 (CQCN…KCRA). Disulfide bonds link C462–C470, C464–C481, C484–C493, C496–C514, C517–C531, C519–C538, C541–C550, C553–C570, C573–C585, C575–C591, and C593–C602. One can recognise a Laminin EGF-like 8; truncated domain in the interval 573 to 602 (CNCNPMGSEPVGCRSDGTCVCKPGFGGPNC). The tract at residues 603 to 1193 (EHGAFSCPAC…CYNTQALEQQ (591 aa)) is domain II and I. Residues 611–718 (ACYNQVKIQM…GSQYQNRVRD (108 aa)) are a coiled coil. Residues S803 and S805 are each glycosylated (O-linked (Xyl...) (chondroitin sulfate) serine). 2 coiled-coil regions span residues 811–1076 (AVVQ…AVQM) and 1117–1193 (EEGL…LEQQ). 2 N-linked (GlcNAc...) asparagine glycosylation sites follow: N942 and N1033.

In terms of assembly, laminin is a complex glycoprotein, consisting of three different polypeptide chains (alpha, beta, gamma), which are bound to each other by disulfide bonds into a cross-shaped molecule comprising one long and three short arms with globules at each end. Gamma-2 is a subunit of laminin-5 (laminin-332 or epiligrin/kalinin/nicein). In terms of processing, O-glycosylated; contains chondroitin sulfate (CS). CS attachment is on either Ser-803 or Ser-805. As to expression, the large variant is expressed only in specific epithelial cells of embryonic and neonatal tissues. In 17-week old embryo the small variant is found in cerebral cortex, lung, and distal tubes of kidney, but not in epithelia except for distal tubuli.

It is found in the secreted. It localises to the extracellular space. The protein localises to the extracellular matrix. The protein resides in the basement membrane. Functionally, binding to cells via a high affinity receptor, laminin is thought to mediate the attachment, migration and organization of cells into tissues during embryonic development by interacting with other extracellular matrix components. Ladsin exerts cell-scattering activity toward a wide variety of cells, including epithelial, endothelial, and fibroblastic cells. The protein is Laminin subunit gamma-2 (LAMC2) of Homo sapiens (Human).